The sequence spans 455 residues: MSFRSIVRDVRDSIGSLSRRSFDFKLSSLNKEGGKSRGSVQDSHEEQLVVTIQETPWANLPPELLRDVIKRLEESESVWPARRHVVACASVCRSWRDMCKEIVQSPELSGKITFPVSLKQPGPRDATMQCFIKRDKSNLTYHLYLCLSPALLVENGKFLLSAKRIRRTTYTEYVISMHADTISRSSNTYIGKIRSNFLGTKFIIYDTQPAYNSNIARAVQPVGLSRRFYSKRVSPKVPSGSYKIAQVSYELNVLGTRGPRRMHCAMNSIPASSLAEGGTVPGQPDIIVPRSILDESFRSITSSSSRKITYDYSNDFSSARFSDILGPLSEDQEVVLEEGKERNSPPLVLKNKPPRWHEQLQCWCLNFRGRVTVASVKNFQLIAANQPQPQPQPQPQPQPLTQPQPSGQTDGPDKIILQFGKVGKDMFTMDFRYPLSAFQAFAICLSSFDTKLACE.

Residues 54-112 (ETPWANLPPELLRDVIKRLEESESVWPARRHVVACASVCRSWRDMCKEIVQSPELSGKI) enclose the F-box domain. The interval 386 to 414 (QPQPQPQPQPQPQPLTQPQPSGQTDGPDK) is disordered. Positions 388–402 (QPQPQPQPQPQPLTQ) are enriched in pro residues.

Belongs to the TUB family. In terms of tissue distribution, ubiquitous.

This is Tubby-like F-box protein 1 from Arabidopsis thaliana (Mouse-ear cress).